We begin with the raw amino-acid sequence, 678 residues long: DNA ligase (678 aa).

NAD(+) is bound by residues 47-51, 96-97, and glutamate 122; these read DSDYD and SL. Lysine 124 serves as the catalytic N6-AMP-lysine intermediate. The NAD(+) site is built by arginine 145, glutamate 182, lysine 300, and lysine 324. Zn(2+)-binding residues include cysteine 418, cysteine 421, cysteine 436, and cysteine 442. One can recognise a BRCT domain in the interval 602 to 678; it reads AYNESFTGKT…ILEDNLKDLL (77 aa).

The protein belongs to the NAD-dependent DNA ligase family. LigA subfamily. Mg(2+) is required as a cofactor. Requires Mn(2+) as cofactor.

It carries out the reaction NAD(+) + (deoxyribonucleotide)n-3'-hydroxyl + 5'-phospho-(deoxyribonucleotide)m = (deoxyribonucleotide)n+m + AMP + beta-nicotinamide D-nucleotide.. In terms of biological role, DNA ligase that catalyzes the formation of phosphodiester linkages between 5'-phosphoryl and 3'-hydroxyl groups in double-stranded DNA using NAD as a coenzyme and as the energy source for the reaction. It is essential for DNA replication and repair of damaged DNA. The chain is DNA ligase from Francisella tularensis subsp. holarctica (strain OSU18).